Reading from the N-terminus, the 1279-residue chain is ATP-dependent helicase/nuclease subunit A (1279 aa).

The UvrD-like helicase ATP-binding domain maps to 4–499 (TKWTDEQRQA…VKLFKNFRSR (496 aa)). 25–32 (AGAGAGKT) serves as a coordination point for ATP. The UvrD-like helicase C-terminal domain occupies 526–853 (EEALKVGASY…RIMSIHKSKG (328 aa)).

Belongs to the helicase family. AddA subfamily. In terms of assembly, heterodimer of AddA and AddB/RexB. Mg(2+) is required as a cofactor.

The catalysed reaction is Couples ATP hydrolysis with the unwinding of duplex DNA by translocating in the 3'-5' direction.. It catalyses the reaction ATP + H2O = ADP + phosphate + H(+). Functionally, the heterodimer acts as both an ATP-dependent DNA helicase and an ATP-dependent, dual-direction single-stranded exonuclease. Recognizes the chi site generating a DNA molecule suitable for the initiation of homologous recombination. The AddA nuclease domain is required for chi fragment generation; this subunit has the helicase and 3' -&gt; 5' nuclease activities. The polypeptide is ATP-dependent helicase/nuclease subunit A (Clostridium botulinum (strain ATCC 19397 / Type A)).